The following is a 156-amino-acid chain: 6,7-dimethyl-8-ribityllumazine synthase (156 aa).

Residues F22, 57–59 (AYE), and 81–83 (TVI) contribute to the 5-amino-6-(D-ribitylamino)uracil site. Residue 86–87 (GT) coordinates (2S)-2-hydroxy-3-oxobutyl phosphate. Catalysis depends on H89, which acts as the Proton donor. F114 is a 5-amino-6-(D-ribitylamino)uracil binding site. R128 provides a ligand contact to (2S)-2-hydroxy-3-oxobutyl phosphate.

The protein belongs to the DMRL synthase family. Forms an icosahedral capsid composed of 60 subunits, arranged as a dodecamer of pentamers.

It carries out the reaction (2S)-2-hydroxy-3-oxobutyl phosphate + 5-amino-6-(D-ribitylamino)uracil = 6,7-dimethyl-8-(1-D-ribityl)lumazine + phosphate + 2 H2O + H(+). The protein operates within cofactor biosynthesis; riboflavin biosynthesis; riboflavin from 2-hydroxy-3-oxobutyl phosphate and 5-amino-6-(D-ribitylamino)uracil: step 1/2. Catalyzes the formation of 6,7-dimethyl-8-ribityllumazine by condensation of 5-amino-6-(D-ribitylamino)uracil with 3,4-dihydroxy-2-butanone 4-phosphate. This is the penultimate step in the biosynthesis of riboflavin. This is 6,7-dimethyl-8-ribityllumazine synthase from Serratia proteamaculans (strain 568).